Consider the following 31-residue polypeptide: Cytochrome b6-f complex subunit 6 (31 aa).

Residues 3–23 traverse the membrane as a helical segment; that stretch reads IAIDYFLLVGFCFAFTSGLYL.

It belongs to the PetL family. As to quaternary structure, the 4 large subunits of the cytochrome b6-f complex are cytochrome b6, subunit IV (17 kDa polypeptide, PetD), cytochrome f and the Rieske protein, while the 4 small subunits are PetG, PetL, PetM and PetN. The complex functions as a dimer.

Its subcellular location is the plastid. The protein resides in the chloroplast thylakoid membrane. Functionally, component of the cytochrome b6-f complex, which mediates electron transfer between photosystem II (PSII) and photosystem I (PSI), cyclic electron flow around PSI, and state transitions. PetL is important for photoautotrophic growth as well as for electron transfer efficiency and stability of the cytochrome b6-f complex. In Trieres chinensis (Marine centric diatom), this protein is Cytochrome b6-f complex subunit 6.